The sequence spans 59 residues: Lantipeptide Flvbeta.f (59 aa).

Residues 1–27 (MEKMNNIAGITPENELDEMFDDSVVGA) constitute a propeptide, cleaved by FlvT. A 2,3-didehydrobutyrine; by FlvM2 mark is found at Thr-31 and Thr-32. 2 cross-links (beta-methyllanthionine (Thr-Cys); by FlvM2) span residues 41–47 (TKNPQIC) and 53–56 (TVKC).

Post-translationally, contains DL-beta-methyllanthionine, when coepressed in E.coli with the flavecin synthetase FlvM2.

The protein resides in the secreted. Its function is as follows. Lanthionine-containing peptide that does probably not show antibacterial activity, since its analog [+7]Flvbeta.f does not show antibacterial activity against M.luteus. Also does not show antibiotic activity when tested with [Del2]Flvalpha.a, an analog of Flvalpha.a, which is encoded by the same operon than Flvbeta.f. The bactericidal activity of lantibiotics is based on depolarization of energized bacterial cytoplasmic membranes, initiated by the formation of aqueous transmembrane pores. The chain is Lantipeptide Flvbeta.f from Ruminococcus flavefaciens.